We begin with the raw amino-acid sequence, 86 residues long: Anti-adapter protein IraP (86 aa).

Residues 1-36 (MKNLISELLLRLAQKEEESKELVAQVEALEIIVTAM) adopt a coiled-coil conformation.

Belongs to the IraP family. Interacts with RssB.

The protein resides in the cytoplasm. Functionally, inhibits RpoS proteolysis by regulating RssB activity, thereby increasing the stability of the sigma stress factor RpoS especially during phosphate starvation, but also in stationary phase and during nitrogen starvation. Its effect on RpoS stability is due to its interaction with RssB, which probably blocks the interaction of RssB with RpoS, and the consequent delivery of the RssB-RpoS complex to the ClpXP protein degradation pathway. In Citrobacter koseri (strain ATCC BAA-895 / CDC 4225-83 / SGSC4696), this protein is Anti-adapter protein IraP.